A 382-amino-acid polypeptide reads, in one-letter code: Fimbrial usher domain-containing protein YdeT (382 aa).

The polypeptide is Fimbrial usher domain-containing protein YdeT (ydeT) (Escherichia coli (strain K12)).